The chain runs to 392 residues: Isocitrate dehydrogenase [NAD] subunit gamma, mitochondrial (392 aa).

The transit peptide at 1 to 39 (MALKVATAAGGAVKAALRPALLWRPWEVLGSHEAPRRSF) directs the protein to the mitochondrion. Citrate contacts are provided by Thr-119 and Asn-132. Residues Arg-135, Arg-166, and Asp-253 each contribute to the substrate site. Position 253 (Asp-253) interacts with Mn(2+). 3 residues coordinate ADP: Asn-311, Thr-312, and Asn-323.

Belongs to the isocitrate and isopropylmalate dehydrogenases family. As to quaternary structure, heterooligomer of subunits alpha (IDH3A), beta (IDH3B), and gamma (IDH3G) in the apparent ratio of 2:1:1. The heterodimer containing one IDH3A and one IDH3B subunit and the heterodimer containing one IDH3A and one IDH3G subunit assemble into a heterotetramer (which contains two subunits of IDH3A, one of IDH3B and one of IDH3G) and further into the heterooctamer. The cofactor is Mg(2+). Mn(2+) serves as cofactor.

It localises to the mitochondrion. The heterotetramer and the heterodimer composed of IDH3A and IDH3G subunits can be allosterically activated by citrate (CIT) or/and ADP, and the two activators can act independently or synergistically. The heterodimer composed of IDH3A and IDH3B subunits cannot be allosterically regulated and the allosteric regulation of the heterotetramer is through the IDH3G subunit and not the IDH3B subunit. The IDH3G subunit contains the allosteric site which consists of a CIT-binding site and an ADP-binding site, and the binding of CIT and ADP causes conformational changes at the allosteric site which are transmitted to the active site in the catalytic subunit (IDH3A) through a cascade of conformational changes at the heterodimer interface, leading to stabilization of the isocitrate-binding at the active site and thus activation of the enzyme. ATP can activate the heterotetramer and the heterodimer composed of IDH3A and IDH3G subunits at low concentrations but inhibits their activities at high concentrations, whereas ATP exhibits only inhibitory effect on the heterodimer composed of IDH3A and IDH3B subunits. In terms of biological role, regulatory subunit which plays a role in the allosteric regulation of the enzyme catalyzing the decarboxylation of isocitrate (ICT) into alpha-ketoglutarate. The heterodimer composed of the alpha (IDH3A) and beta (IDH3B) subunits and the heterodimer composed of the alpha (IDH3A) and gamma (IDH3G) subunits, have considerable basal activity but the full activity of the heterotetramer (containing two subunits of IDH3A, one of IDH3B and one of IDH3G) requires the assembly and cooperative function of both heterodimers. The protein is Isocitrate dehydrogenase [NAD] subunit gamma, mitochondrial (IDH3G) of Bos taurus (Bovine).